Reading from the N-terminus, the 287-residue chain is Carbon monoxide dehydrogenase medium chain (287 aa).

An FAD-binding PCMH-type domain is found at M1–Q177. Residues A32–S36 and T111–D115 contribute to the FAD site.

As to quaternary structure, dimer of heterotrimers. Each heterotrimer consists of a large, a medium and a small subunit. The cofactor is FAD.

The enzyme catalyses CO + a quinone + H2O = a quinol + CO2. In terms of biological role, catalyzes the oxidation of carbon monoxide to carbon dioxide. The sequence is that of Carbon monoxide dehydrogenase medium chain (cutM) from Hydrogenophaga pseudoflava (Pseudomonas carboxydoflava).